The following is a 740-amino-acid chain: Death domain-associated protein 6 (740 aa).

The disordered stretch occupies residues 1–55; that stretch reads MATANSIIVLDDDDEDEAAAQPGPSHPLPNAASPGAEAPSSSEPHGARGSSSSGG. A necessary for interaction with USP7 and ATRX region spans residues 1-160; sequence MATANSIIVL…TSNEPSGNNP (160 aa). Ser25 carries the post-translational modification Phosphoserine. Low complexity predominate over residues 29–55; sequence PNAASPGAEAPSSSEPHGARGSSSSGG. Lys142 participates in a covalent cross-link: Glycyl lysine isopeptide (Lys-Gly) (interchain with G-Cter in SUMO2). A disordered region spans residues 147-185; it reads PAATTSNEPSGNNPPTHLSLDPTNAENTASQSPRTRGSR. The span at 149–181 shows a compositional bias: polar residues; that stretch reads ATTSNEPSGNNPPTHLSLDPTNAENTASQSPRT. Phosphoserine is present on residues Ser178 and Ser213. Coiled coils occupy residues 180 to 217 and 358 to 399; these read RTRG…ELDD and ARRL…ARLQ. Residues 183-417 form an interaction with histone H3.3 region; sequence GSRRQIQRLE…TPEASLDSGE (235 aa). A necessary for interaction with USP7 region spans residues 347–570; that stretch reads GVDPALSDPV…SPVSQLFELE (224 aa). A disordered region spans residues 384–724; sequence DKSEEGERKK…PRPGTCKTSV (341 aa). Positions 391–395 match the Nuclear localization signal motif; that stretch reads RKKRR. Phosphoserine occurs at positions 412 and 424. A coiled-coil region spans residues 430–489; sequence ASRAETDDEDDEESDEEEEEEEEEEEEEATDSEEEEDLEQMQEGQEDDEEEDEEEEAAAG. Residues 435-486 show a composition bias toward acidic residues; that stretch reads TDDEDDEESDEEEEEEEEEEEEEATDSEEEEDLEQMQEGQEDDEEEDEEEEA. Thr459 carries the phosphothreonine modification. A phosphoserine mark is found at Ser495 and Ser498. Positions 496–505 are enriched in polar residues; it reads PMSSLQISNE. Residues 501 to 625 are interaction with MAP3K5; that stretch reads QISNEKNLEP…GVSPHNWGDS (125 aa). N6-acetyllysine is present on Lys512. Residues 514–524 show a composition bias toward polar residues; it reads ISRSSGEQQNK. Low complexity predominate over residues 529–542; sequence SPSLLSEEPLAPSS. Residues 551-561 are compositionally biased toward acidic residues; it reads QPEELTLEEES. A phosphoserine mark is found at Ser561 and Ser580. Residues 578–590 are compositionally biased toward polar residues; it reads TPSSVETDISSSR. The tract at residues 626 to 740 is interaction with SPOP; sequence GPPCKKSRKE…EEIIVLSDSD (115 aa). (Microbial infection) Interaction with Puumala hantavirus nucleoprotein regions lie at residues 627–634 and 658–663; these read PPCKKSRK and KNGKKI. Positions 628 to 634 match the Nuclear localization signal motif; the sequence is PCKKSRK. Residues Lys630 and Lys631 each participate in a glycyl lysine isopeptide (Lys-Gly) (interchain with G-Cter in SUMO1) cross-link. Basic and acidic residues predominate over residues 650–660; that stretch reads ERQRSVHEKNG. Phosphoserine occurs at positions 668 and 671. A compositionally biased stretch (low complexity) spans 673–683; the sequence is LASLAPVADSS. 4 positions are modified to phosphoserine: Ser688, Ser702, Ser737, and Ser739. Residues 693-711 show a composition bias toward polar residues; the sequence is LVTSSLCIPSPARLSQTPH. Residues 733–740 are sumo interaction motif (SIM); it reads IIVLSDSD.

Belongs to the DAXX family. In terms of assembly, homomultimer. Interacts (via C-terminus) with TNFRSF6 (via death domain). Interacts with PAX5, SLC2A4/GLUT4, MAP3K5, TGFBR2, phosphorylated dimeric HSPB1/HSP27, CENPC, ETS1, sumoylated PML, UBE2I, MCRS1 and TP53. Interacts (via N-terminus) with HIPK2 and HIPK3. Interacts with HIPK1, which induces translocation from PML/POD/ND10 nuclear bodies to chromatin and enhances association with HDAC1. Interacts (non-phosphorylated) with PAX3, PAX7, DEK, HDAC1, HDAC2, HDAC3, acetylated histone H4 and histones H2A, H2B, H3, H3.3 and H4. Interacts with SPOP; mediating CUL3-dependent proteasomal degradation. Interacts with CBP; the interaction is dependent the sumoylation of CBP and suppresses CBP transcriptional activity via recruitment of HDAC2 directly in the complex with TP53 and HIPK2. Interacts with AXIN1; the interaction stimulates the interaction of DAXX with TP53, stimulates 'Ser-46' phosphorylation of TP53 on and induces cell death on UV irradiation. Interacts with MDM2; the interaction is direct. Interacts with USP7; the interaction is direct and independent of MDM2 and TP53. Part of a complex with DAXX, MDM2 and USP7 under non-stress conditions. Interacts (via N-terminus) with RASSF1 (via C-terminus); the interaction is independent of MDM2 and TP53; RASSF1 isoform A disrupts interactions among MDM2, DAXX and USP7, thus contributing to the efficient activation of TP53 by promoting MDM2 self-ubiquitination in cell-cycle checkpoint control in response to DNA damage. Interacts with ATRX to form the chromatin remodeling complex ATRX:DAXX. Interacts with HSF1 (via homotrimeric form preferentially); this interaction relieves homotrimeric HSF1 from repression of its transcriptional activity by HSP90-dependent multichaperone complex upon heat shock. Interacts with SUMO1P1/SUMO5. (Microbial infection) Interacts with human cytomegalovirus/HHV-5 tegument phosphoprotein pp71 and protein UL123. As to quaternary structure, (Microbial infection) Interacts with Epstein-Barr virus protein BNRF1. In terms of assembly, (Microbial infection) Interacts with human adenovirus 5 E1B-55K protein; this interaction might alterate the normal interactions of DAXX, PML, and TP53, which may contribute to cell transformation. (Microbial infection) Interacts with Puumala hantavirus nucleoprotein. Sumoylated with SUMO1 on multiple lysine residues. In terms of processing, phosphorylated by HIPK1 upon glucose deprivation. Post-translationally, polyubiquitinated; which is promoted by CUL3 and SPOP and results in proteasomal degradation. Ubiquitinated by MDM2; inducing its degradation. Deubiquitinated by USP7; leading to stabilize it. As to expression, ubiquitous.

It is found in the cytoplasm. The protein resides in the nucleus. Its subcellular location is the nucleoplasm. The protein localises to the PML body. It localises to the nucleolus. It is found in the chromosome. The protein resides in the centromere. Transcription corepressor known to repress transcriptional potential of several sumoylated transcription factors. Down-regulates basal and activated transcription. Its transcription repressor activity is modulated by recruiting it to subnuclear compartments like the nucleolus or PML/POD/ND10 nuclear bodies through interactions with MCSR1 and PML, respectively. Seems to regulate transcription in PML/POD/ND10 nuclear bodies together with PML and may influence TNFRSF6-dependent apoptosis thereby. Inhibits transcriptional activation of PAX3 and ETS1 through direct protein-protein interactions. Modulates PAX5 activity; the function seems to involve CREBBP. Acts as an adapter protein in a MDM2-DAXX-USP7 complex by regulating the RING-finger E3 ligase MDM2 ubiquitination activity. Under non-stress condition, in association with the deubiquitinating USP7, prevents MDM2 self-ubiquitination and enhances the intrinsic E3 ligase activity of MDM2 towards TP53, thereby promoting TP53 ubiquitination and subsequent proteasomal degradation. Upon DNA damage, its association with MDM2 and USP7 is disrupted, resulting in increased MDM2 autoubiquitination and consequently, MDM2 degradation, which leads to TP53 stabilization. Acts as a histone chaperone that facilitates deposition of histone H3.3. Acts as a targeting component of the chromatin remodeling complex ATRX:DAXX which has ATP-dependent DNA translocase activity and catalyzes the replication-independent deposition of histone H3.3 in pericentric DNA repeats outside S-phase and telomeres, and the in vitro remodeling of H3.3-containing nucleosomes. Does not affect the ATPase activity of ATRX but alleviates its transcription repression activity. Upon neuronal activation associates with regulatory elements of selected immediate early genes where it promotes deposition of histone H3.3 which may be linked to transcriptional induction of these genes. Required for the recruitment of histone H3.3:H4 dimers to PML-nuclear bodies (PML-NBs); the process is independent of ATRX and facilitated by ASF1A; PML-NBs are suggested to function as regulatory sites for the incorporation of newly synthesized histone H3.3 into chromatin. In case of overexpression of centromeric histone variant CENPA (as found in various tumors) is involved in its mislocalization to chromosomes; the ectopic localization involves a heterotypic tetramer containing CENPA, and histones H3.3 and H4 and decreases binding of CTCF to chromatin. Proposed to mediate activation of the JNK pathway and apoptosis via MAP3K5 in response to signaling from TNFRSF6 and TGFBR2. Interaction with HSPB1/HSP27 may prevent interaction with TNFRSF6 and MAP3K5 and block DAXX-mediated apoptosis. In contrast, in lymphoid cells JNC activation and TNFRSF6-mediated apoptosis may not involve DAXX. Shows restriction activity towards human cytomegalovirus (HCMV). Plays a role as a positive regulator of the heat shock transcription factor HSF1 activity during the stress protein response. In Homo sapiens (Human), this protein is Death domain-associated protein 6 (DAXX).